The chain runs to 282 residues: Putative 4-diphosphocytidyl-2-C-methyl-D-erythritol kinase (282 aa).

Lysine 9 is an active-site residue. An ATP-binding site is contributed by 93-103 (PVSAGLAGGSA). The active site involves aspartate 135.

The protein belongs to the GHMP kinase family. IspE subfamily.

It catalyses the reaction 4-CDP-2-C-methyl-D-erythritol + ATP = 4-CDP-2-C-methyl-D-erythritol 2-phosphate + ADP + H(+). Catalyzes the phosphorylation of the position 2 hydroxy group of 4-diphosphocytidyl-2C-methyl-D-erythritol. This Staphylococcus aureus (strain MRSA252) protein is Putative 4-diphosphocytidyl-2-C-methyl-D-erythritol kinase.